The primary structure comprises 87 residues: Large ribosomal subunit protein bL28 (87 aa).

It belongs to the bacterial ribosomal protein bL28 family.

The polypeptide is Large ribosomal subunit protein bL28 (Akkermansia muciniphila (strain ATCC BAA-835 / DSM 22959 / JCM 33894 / BCRC 81048 / CCUG 64013 / CIP 107961 / Muc)).